A 1010-amino-acid polypeptide reads, in one-letter code: Probable LRR receptor-like serine/threonine-protein kinase At3g47570 (1010 aa).

Residues 1–19 form the signal peptide; that stretch reads MRLFLLLAFNALMLLETHG. The Extracellular segment spans residues 20–645; that stretch reads FTDETDRQAL…SSRLKKVVIG (626 aa). 2 N-linked (GlcNAc...) asparagine glycosylation sites follow: asparagine 48 and asparagine 88. LRR repeat units lie at residues 89 to 113, 114 to 137, 139 to 161, 162 to 185, 186 to 209, 211 to 233, 234 to 258, 259 to 282, 283 to 307, and 310 to 333; these read LSFL…VGQL, SRLE…LYNC, RLLN…LGSL, TNLV…LGNL, TLLE…VAQL, QIWS…LYNL, SSLK…GILL, PNLL…LSNI, STLE…NVPN, and LLFL…TSLT. N-linked (GlcNAc...) asparagine glycosylation occurs at asparagine 136. Residue asparagine 184 is glycosylated (N-linked (GlcNAc...) asparagine). 2 N-linked (GlcNAc...) asparagine glycosylation sites follow: asparagine 221 and asparagine 232. Residues asparagine 281 and asparagine 294 are each glycosylated (N-linked (GlcNAc...) asparagine). Residues asparagine 334 and asparagine 358 are each glycosylated (N-linked (GlcNAc...) asparagine). LRR repeat units lie at residues 335-359, 361-384, 385-408, 410-432, 433-455, 457-480, 481-504, 505-528, 530-551, 552-574, and 575-600; these read CTQL…IANL, AKLV…IGNL, INLQ…LGKL, NLRY…IGNM, TMLE…SLGN, SHLL…IMKI, QQLL…IGAL, QNLG…LGNC, TMES…LKGL, VGVK…YFAS, and FSKL…IFEN. 3 N-linked (GlcNAc...) asparagine glycosylation sites follow: asparagine 431, asparagine 455, and asparagine 470. 2 N-linked (GlcNAc...) asparagine glycosylation sites follow: asparagine 582 and asparagine 600. A helical membrane pass occupies residues 646–666; sequence VSVGITLLLLLFMASVTLIWL. Residues 667–1010 are Cytoplasmic-facing; that stretch reads RKRKKNKETN…FFKASRTTWR (344 aa). Threonine 699 is subject to Phosphothreonine. The Protein kinase domain maps to 702 to 1002; that stretch reads FSSSNMVGSG…ELISIRERFF (301 aa). ATP-binding positions include 708–716 and lysine 731; that span reads VGSGSFGTV. Phosphotyrosine is present on residues tyrosine 781 and tyrosine 826. Catalysis depends on aspartate 839, which acts as the Proton acceptor. A Phosphotyrosine modification is found at tyrosine 887.

Belongs to the protein kinase superfamily. Ser/Thr protein kinase family.

The protein localises to the cell membrane. It carries out the reaction L-seryl-[protein] + ATP = O-phospho-L-seryl-[protein] + ADP + H(+). It catalyses the reaction L-threonyl-[protein] + ATP = O-phospho-L-threonyl-[protein] + ADP + H(+). The sequence is that of Probable LRR receptor-like serine/threonine-protein kinase At3g47570 from Arabidopsis thaliana (Mouse-ear cress).